The following is a 660-amino-acid chain: tRNA 5-methylaminomethyl-2-thiouridine biosynthesis bifunctional protein MnmC (660 aa).

Residues 1–235 (MTITRHARID…KWEVLRGAFI (235 aa)) are tRNA (mnm(5)s(2)U34)-methyltransferase. The tract at residues 266–660 (IGAGLAGCAT…LRGLIRGGGK (395 aa)) is FAD-dependent cmnm(5)s(2)U34 oxidoreductase.

In the N-terminal section; belongs to the methyltransferase superfamily. tRNA (mnm(5)s(2)U34)-methyltransferase family. It in the C-terminal section; belongs to the DAO family. It depends on FAD as a cofactor.

The protein localises to the cytoplasm. The catalysed reaction is 5-aminomethyl-2-thiouridine(34) in tRNA + S-adenosyl-L-methionine = 5-methylaminomethyl-2-thiouridine(34) in tRNA + S-adenosyl-L-homocysteine + H(+). In terms of biological role, catalyzes the last two steps in the biosynthesis of 5-methylaminomethyl-2-thiouridine (mnm(5)s(2)U) at the wobble position (U34) in tRNA. Catalyzes the FAD-dependent demodification of cmnm(5)s(2)U34 to nm(5)s(2)U34, followed by the transfer of a methyl group from S-adenosyl-L-methionine to nm(5)s(2)U34, to form mnm(5)s(2)U34. The protein is tRNA 5-methylaminomethyl-2-thiouridine biosynthesis bifunctional protein MnmC of Pseudomonas syringae pv. tomato (strain ATCC BAA-871 / DC3000).